The chain runs to 90 residues: Putative regulatory protein NT01CX_2250 (90 aa).

It belongs to the RemA family.

In Clostridium novyi (strain NT), this protein is Putative regulatory protein NT01CX_2250.